Here is a 943-residue protein sequence, read N- to C-terminus: Isoleucine--tRNA ligase (943 aa).

Positions Pro-59–His-69 match the 'HIGH' region motif. L-isoleucyl-5'-AMP is bound at residue Glu-577. The short motif at Lys-618–Ser-622 is the 'KMSKS' region element. ATP is bound at residue Lys-621. Zn(2+) is bound by residues Cys-906, Cys-909, Cys-926, and Cys-929.

Belongs to the class-I aminoacyl-tRNA synthetase family. IleS type 1 subfamily. As to quaternary structure, monomer. The cofactor is Zn(2+).

The protein resides in the cytoplasm. It carries out the reaction tRNA(Ile) + L-isoleucine + ATP = L-isoleucyl-tRNA(Ile) + AMP + diphosphate. Its function is as follows. Catalyzes the attachment of isoleucine to tRNA(Ile). As IleRS can inadvertently accommodate and process structurally similar amino acids such as valine, to avoid such errors it has two additional distinct tRNA(Ile)-dependent editing activities. One activity is designated as 'pretransfer' editing and involves the hydrolysis of activated Val-AMP. The other activity is designated 'posttransfer' editing and involves deacylation of mischarged Val-tRNA(Ile). In Xylella fastidiosa (strain 9a5c), this protein is Isoleucine--tRNA ligase.